The chain runs to 611 residues: Actin-interacting protein 1 (611 aa).

9 WD repeats span residues 57–96 (EHSH…HILK), 145–185 (GQAR…FKST), 188–227 (EHTK…KTGV), 237–276 (AHSG…VEKT), 322–361 (GHNK…SNRV), 446–485 (PISY…VSEV), 489–528 (VHPA…ELAH), 534–573 (FHTA…DHPI), and 579–610 (HAMS…WNVP).

The protein belongs to the WD repeat AIP1 family.

The protein localises to the cytoplasm. It is found in the cytoskeleton. Functionally, induces disassembly of actin filaments in conjunction with ADF/cofilin family proteins. Regulator of actin organization in myofibrils. The polypeptide is Actin-interacting protein 1 (unc-78) (Caenorhabditis elegans).